The primary structure comprises 778 residues: MPAFLGLKCLGKLCSSEKSKVTSSERTSARGSNRKRLIVEDRRVSGTSFTAHRRATITHLLYLCPKDYCPRGRVCNSVDPFVAHPQDPHHPSEKPVIHCHKCGEPCKGEVLRVQTKHFHIKCFTCKVCGCDLAQGGFFIKNGEYLCTLDYQRMYGTRCHGCGEFVEGEVVTALGKTYHPNCFACTICKRPFPPGDRVTFNGRDCLCQLCAQPMSSSPKETTFSSNCAGCGRDIKNGQALLALDKQWHLGCFKCKSCGKVLTGEYISKDGAPYCEKDYQGLFGVKCEACHQFITGKVLEAGDKHYHPSCARCSRCNQMFTEGEEMYLQGSTVWHPDCKQSTKTEEKLRPTRTSSESIYSRPGSSIPGSPGHTIYAKVDNEILDYKDLAAIPKVKAIYDIERPDLITYEPFYTSGYDDKQERQSLGESPRTLSPTPSAEGYQDVRDRMIHRSTSQGSINSPVYSRHSYTPTTSRSPQHFHRPGNEPSSGRNSPLPYRPDSRPLTPTYAQAPKHFHVPDQGINIYRKPPIYKQHAALAAQSKSSEDIIKFSKFPAAQAPDPSETPKIETDHWPGPPSFAVVGPDMKRRSSGREEDDEELLRRRQLQEEQLMKLNSGLGQLILKEEMEKESRERSSLLASRYDSPINSASHIPSSKTASLPGYGRNGLHRPVSTDFAQYNSYGDVSGGVRDYQTLPDGHMPAMRMDRGVSMPNMLEPKIFPYEMLMVTNRGRNKILREVDRTRLERHLAPEVFREIFGMSIQEFDRLPLWRRNDMKKKAKLF.

LIM zinc-binding domains lie at 97-156 (IHCH…MYGT), 156-216 (TRCH…MSSS), 224-283 (SNCA…LFGV), and 283-343 (VKCE…TKTE). Phosphoserine is present on Ser216. Residues 339 to 370 (STKTEEKLRPTRTSSESIYSRPGSSIPGSPGH) form a disordered region. Positions 360-369 (PGSSIPGSPG) are enriched in low complexity. Ser367 carries the phosphoserine modification. 2 positions are modified to phosphotyrosine: Tyr373 and Tyr396. 2 disordered regions span residues 414–510 (YDDK…QAPK) and 552–597 (AAQA…EELL). A phosphoserine mark is found at Ser422, Ser426, and Ser431. Over residues 423 to 434 (LGESPRTLSPTP) the composition is skewed to polar residues. The residue at position 433 (Thr433) is a Phosphothreonine. The residue at position 435 (Ser435) is a Phosphoserine. The residue at position 439 (Tyr439) is a Phosphotyrosine. Over residues 449–474 (RSTSQGSINSPVYSRHSYTPTTSRSP) the composition is skewed to polar residues. Residues Ser452, Ser455, Ser458, Ser498, and Ser587 each carry the phosphoserine modification. Residues 590–614 (EEDDEELLRRRQLQEEQLMKLNSGL) are a coiled coil. Lys620 is covalently cross-linked (Glycyl lysine isopeptide (Lys-Gly) (interchain with G-Cter in SUMO2)). Phosphoserine is present on residues Ser640, Ser655, Ser677, and Ser706. Positions 710–778 (MLEPKIFPYE…NDMKKKAKLF (69 aa)) constitute an HP domain.

In terms of assembly, binds F-actin. Interacts with ABRA. In terms of tissue distribution, detected in liver, heart, skeletal muscle, brain and retina, where it is concentrated in the inner segment and in the outer plexiform layers.

The protein resides in the cytoplasm. It localises to the cytoskeleton. Its function is as follows. May act as scaffold protein. May play a role in the development of the retina. Has been suggested to play a role in axon guidance. The sequence is that of Actin-binding LIM protein 1 (ABLIM1) from Homo sapiens (Human).